Reading from the N-terminus, the 87-residue chain is MQVLVRDNNVDQALKALKKKMQREGIFREMKLRGHYEKPSEKKAREKAEAVRRARKLARKKLQREGLLPSKPKPAFGADRRPSAAAR.

Positions 35 to 52 are enriched in basic and acidic residues; that stretch reads HYEKPSEKKAREKAEAVR. Residues 35 to 87 are disordered; it reads HYEKPSEKKAREKAEAVRRARKLARKKLQREGLLPSKPKPAFGADRRPSAAAR. The span at 53–62 shows a compositional bias: basic residues; that stretch reads RARKLARKKL. Residues 78–87 show a composition bias toward basic and acidic residues; that stretch reads ADRRPSAAAR.

The polypeptide is Small ribosomal subunit protein bS21 (Rhodopseudomonas palustris (strain ATCC BAA-98 / CGA009)).